Consider the following 302-residue polypeptide: Negative regulator of the PHO system (302 aa).

Residues 6–296 (FKQLEKLGNG…AKQALLHPWF (291 aa)) enclose the Protein kinase domain. Residues 12–20 (LGNGTYATV) and Lys-35 each bind ATP. The active-site Proton acceptor is Asp-132.

It belongs to the protein kinase superfamily. CMGC Ser/Thr protein kinase family. CDC2/CDKX subfamily. As to quaternary structure, interacts with a number of cyclins.

It catalyses the reaction L-seryl-[protein] + ATP = O-phospho-L-seryl-[protein] + ADP + H(+). The catalysed reaction is L-threonyl-[protein] + ATP = O-phospho-L-threonyl-[protein] + ADP + H(+). Functionally, when phosphate concentrations are high it phosphorylates the PHO4 transcription factor thus establishing repression. In Candida glabrata (strain ATCC 2001 / BCRC 20586 / JCM 3761 / NBRC 0622 / NRRL Y-65 / CBS 138) (Yeast), this protein is Negative regulator of the PHO system (PHO85).